The following is a 576-amino-acid chain: Boron transporter 1 (576 aa).

The Cytoplasmic portion of the chain corresponds to 1-84 (MSNESTRVTV…SDWVDAFNYR (84 aa)). A disordered region spans residues 19–48 (ECAQALERTNDELDRESSVSESRSDEESHE). The span at 26–48 (RTNDELDRESSVSESRSDEESHE) shows a compositional bias: basic and acidic residues. Residues 85-105 (VIPSIVDTYFNNLLPAIAFAQ) traverse the membrane as a helical segment. Topologically, residues 106–116 (DMFDRTDNSYG) are extracellular. A helical membrane pass occupies residues 117 to 134 (VNEVLLSSAMAGIVFGVL). Topologically, residues 135 to 140 (GGQPLC) are cytoplasmic. The helical transmembrane segment at 141 to 160 (IVGVTGPISIFNYTVYEIIK) threads the bilayer. The Extracellular segment spans residues 161-165 (PLNTS). A helical membrane pass occupies residues 166–186 (YFGFMFWICMWSMIFHLVLAF). Over 187–192 (TNAVCL) the chain is Cytoplasmic. A helical transmembrane segment spans residues 193–213 (LQYVTTFPCDIFGLFINVVYI). The Extracellular portion of the chain corresponds to 214-235 (QKGIQILTRQFSAKSGEKSVQD). A helical transmembrane segment spans residues 236–256 (GFASVVVALVMTAFGLFFKLF). The Cytoplasmic portion of the chain corresponds to 257 to 274 (HYYPLFSHRIRTFISDYS). A helical membrane pass occupies residues 275–295 (TALSVLFWSSFTHFGGYLHDV). The Extracellular segment spans residues 296–329 (KFKKLPITKAFFPTSKVNRPQNTWLAYEPIPVKD). Residues 330-350 (VFIALPFGIFLTILFYFDHNV) traverse the membrane as a helical segment. Over 351–373 (SSLMAQRHQYKLKKPSSFHYDFA) the chain is Cytoplasmic. The chain crosses the membrane as a helical span at residues 374–394 (LLGLTTCISGVLGIPAPNGLI). Residues 395–438 (PQAPLHTETLLVRDSNQKVISCVEQRFTNTFQGLMILGTMTRPL) lie on the Extracellular side of the membrane. Residues 439-459 (LVCLGEIPQAVLSGLFFIMGI) traverse the membrane as a helical segment. Residues 460–495 (NGLMTNSIIQRLVFLFSDPNRRDNTSPLMKVSKKSM) are Cytoplasmic-facing. Residues 496-516 (LIFLSFSLTGFAGEFAITNTI) form a helical membrane-spanning segment. The Extracellular portion of the chain corresponds to 517–518 (AA). The helical transmembrane segment at 519-539 (IGFPLVLLLSVLVSFSFAYIF) threads the bilayer. The Cytoplasmic portion of the chain corresponds to 540–576 (PTEELKILDTNVAQKFTIKNLLLENIRDAKFCDKHED).

It belongs to the anion exchanger (TC 2.A.31) family.

It localises to the cell membrane. The protein resides in the vacuole membrane. Its function is as follows. Functions in boric acid/borate export across the plasma membrane, and thereby protects yeast cells from boron toxicity. Involved in the trafficking of proteins to the vacuole. This Saccharomyces cerevisiae (strain ATCC 204508 / S288c) (Baker's yeast) protein is Boron transporter 1 (BOR1).